We begin with the raw amino-acid sequence, 193 residues long: Peptidyl-tRNA hydrolase (193 aa).

His-17 serves as a coordination point for tRNA. Catalysis depends on His-22, which acts as the Proton acceptor. 3 residues coordinate tRNA: Phe-68, Asn-70, and Asn-116.

It belongs to the PTH family. Monomer.

The protein resides in the cytoplasm. It carries out the reaction an N-acyl-L-alpha-aminoacyl-tRNA + H2O = an N-acyl-L-amino acid + a tRNA + H(+). Functionally, hydrolyzes ribosome-free peptidyl-tRNAs (with 1 or more amino acids incorporated), which drop off the ribosome during protein synthesis, or as a result of ribosome stalling. Catalyzes the release of premature peptidyl moieties from peptidyl-tRNA molecules trapped in stalled 50S ribosomal subunits, and thus maintains levels of free tRNAs and 50S ribosomes. The sequence is that of Peptidyl-tRNA hydrolase from Xanthomonas euvesicatoria pv. vesicatoria (strain 85-10) (Xanthomonas campestris pv. vesicatoria).